The sequence spans 302 residues: MQTRNYLLYDVFTTERLAGNPLAVVLDCKGLDTIAMQAIAREFNLSETVFVLPPDNPKHKNRIRIFTPDYEMPFAGHPTVGSAIALAELAGESGAGIFVLEENIGPVRCAVSRHDGAAFAEFDLAKLPEPLQLEADPQAIGAALGLAPHEIGFENHRVAFWSAGVPYVTIPVANLEAAGRIRLDNQAWSELAPRKSEWAFASPYVYCRETVNHESAFHVRMIVPGTPSYEDPATGSAAAAFAGAIMHFDAPTDGISQLWIEQGLEMGRPSRIRLELTVQGGKLASARIGGHAVKVADGKLFI.

Glu-47 is a catalytic residue.

The protein belongs to the PhzF family.

This is an uncharacterized protein from Mesorhizobium japonicum (strain LMG 29417 / CECT 9101 / MAFF 303099) (Mesorhizobium loti (strain MAFF 303099)).